Consider the following 532-residue polypeptide: O-phosphoserine--tRNA(Cys) ligase (532 aa).

Substrate-binding positions include 188–190, 233–235, 275–276, and Asn327; these read HMT, SAS, and YY.

It belongs to the class-II aminoacyl-tRNA synthetase family. O-phosphoseryl-tRNA(Cys) synthetase subfamily. As to quaternary structure, homotetramer. Interacts with SepCysS.

It catalyses the reaction tRNA(Cys) + O-phospho-L-serine + ATP = O-phospho-L-seryl-tRNA(Cys) + AMP + diphosphate. Its function is as follows. Catalyzes the attachment of O-phosphoserine (Sep) to tRNA(Cys). The chain is O-phosphoserine--tRNA(Cys) ligase from Methanocella arvoryzae (strain DSM 22066 / NBRC 105507 / MRE50).